The chain runs to 215 residues: Polysialic acid O-acetyltransferase (215 aa).

Acetyl-CoA is bound by residues aspartate 119–histidine 121, arginine 148, lysine 154, serine 166, tyrosine 171–lysine 172, and lysine 190.

It belongs to the transferase hexapeptide repeat family. As to quaternary structure, homotrimer.

The enzyme catalyses [(2-&gt;6)-alpha-D-glucosyl-(1-&gt;4)-N-acetyl-alpha-D-neuraminosyl](n) + n acetyl-CoA = [(2-&gt;6)-alpha-D-glucosyl-(1-&gt;4)-N,7-O-diacetyl-alpha-D-neuraminosyl](n) + n CoA. It catalyses the reaction [(2-&gt;6)-alpha-D-glucosyl-(1-&gt;4)-N-acetyl-alpha-D-neuraminosyl](n) + n acetyl-CoA = [(2-&gt;6)-alpha-D-glucosyl-(1-&gt;4)-N,O(9)-diacetyl-alpha-D-neuraminosyl](n) + n CoA. In terms of biological role, catalyzes the O-acetylation of capsular polymeric sialic acid consisting of polymers of (2-&gt;6)-alpha-D-glucosyl-(1-&gt;4)-N-acetyl-alpha-D-neuraminosyl residues. Shows high substrate specificity toward polymers of sialic acid that contains a large number of residues. The protein is Polysialic acid O-acetyltransferase of Neisseria meningitidis.